The primary structure comprises 313 residues: MTNVSGVDFQLRSVPLLSRVGADRADRLRTDMEAAAAGWPGAALLRVDSRNRVLVANGRVLLGAAIELADKPPPEAVFLGRVEGGRHVWAVRAALQPIADPDIPAEAVDLRGLGRIMDDTSSQLVSSASALLNWHDNARFSALDGAPTKPARAGWSRVNPITGHEEFPRIDPAVICLVHDGADRAVLARQAAWPERMFSLLAGFVEAGESFEVCVAREIREEIGLTVRDVRYLGSQPWPFPRSLMVGFHALGDPDEEFSFSDGEIAEAAWFTRDEVRAALAAGDWSSASESKLLLPGSISIARVIIESWAACE.

R111 provides a ligand contact to substrate. The Nudix hydrolase domain occupies 168 to 293 (PRIDPAVICL…DWSSASESKL (126 aa)). A divalent metal cation-binding residues include A202, E218, and E222. The Nudix box signature appears at 203–224 (GFVEAGESFEVCVAREIREEIG). 236–243 (QPWPFPRS) is a binding site for substrate. Residue E264 coordinates a divalent metal cation.

The protein belongs to the Nudix hydrolase family. NudC subfamily. Homodimer. Mg(2+) is required as a cofactor. Requires Mn(2+) as cofactor.

The enzyme catalyses a 5'-end NAD(+)-phospho-ribonucleoside in mRNA + H2O = a 5'-end phospho-adenosine-phospho-ribonucleoside in mRNA + beta-nicotinamide D-ribonucleotide + 2 H(+). It carries out the reaction NAD(+) + H2O = beta-nicotinamide D-ribonucleotide + AMP + 2 H(+). The catalysed reaction is NADH + H2O = reduced beta-nicotinamide D-ribonucleotide + AMP + 2 H(+). Functionally, mRNA decapping enzyme that specifically removes the nicotinamide adenine dinucleotide (NAD) cap from a subset of mRNAs by hydrolyzing the diphosphate linkage to produce nicotinamide mononucleotide (NMN) and 5' monophosphate mRNA. The NAD-cap is present at the 5'-end of some mRNAs and stabilizes RNA against 5'-processing. Has preference for mRNAs with a 5'-end purine. Catalyzes the hydrolysis of a broad range of dinucleotide pyrophosphates. This chain is NAD-capped RNA hydrolase NudC, found in Mycobacterium bovis (strain ATCC BAA-935 / AF2122/97).